Here is a 180-residue protein sequence, read N- to C-terminus: Ribulose bisphosphate carboxylase small subunit, chloroplastic 2 (180 aa).

The N-terminal 56 residues, 1–56 (MASMISSSAVTTVSRASRGQSAAVAPFGGLKSMTGFPVKKVNTDITSITSNGGRVK), are a transit peptide targeting the chloroplast.

It belongs to the RuBisCO small chain family. As to quaternary structure, heterohexadecamer of 8 large and 8 small subunits.

The protein resides in the plastid. Its subcellular location is the chloroplast. In terms of biological role, ruBisCO catalyzes two reactions: the carboxylation of D-ribulose 1,5-bisphosphate, the primary event in carbon dioxide fixation, as well as the oxidative fragmentation of the pentose substrate. Both reactions occur simultaneously and in competition at the same active site. Although the small subunit is not catalytic it is essential for maximal activity. The polypeptide is Ribulose bisphosphate carboxylase small subunit, chloroplastic 2 (Pisum sativum (Garden pea)).